An 84-amino-acid chain; its full sequence is Small ribosomal subunit protein uS17 (84 aa).

It belongs to the universal ribosomal protein uS17 family. As to quaternary structure, part of the 30S ribosomal subunit.

Functionally, one of the primary rRNA binding proteins, it binds specifically to the 5'-end of 16S ribosomal RNA. The polypeptide is Small ribosomal subunit protein uS17 (Borrelia hermsii (strain HS1 / DAH)).